Reading from the N-terminus, the 922-residue chain is DNA gyrase subunit A (922 aa).

The segment covering 1–14 has biased composition (low complexity); the sequence is MTETPTDGGSTPPS. The tract at residues 1–24 is disordered; the sequence is MTETPTDGGSTPPSDGGGPGGRIE. The Topo IIA-type catalytic domain occupies 49-518; sequence LPDVRDGLKP…ADGDLSMEDL (470 aa). Tyr-137 functions as the O-(5'-phospho-DNA)-tyrosine intermediate in the catalytic mechanism. The GyrA-box signature appears at 545-551; the sequence is QRRGGKG. The interval 861-922 is disordered; that stretch reads EANGDDELDE…TEPDPGESDG (62 aa). Acidic residues-rich tracts occupy residues 863–890 and 912–922; these read NGDDELDELDESALDEGGAEGGEVDESA and DTEPDPGESDG.

The protein belongs to the type II topoisomerase GyrA/ParC subunit family. Heterotetramer, composed of two GyrA and two GyrB chains. In the heterotetramer, GyrA contains the active site tyrosine that forms a transient covalent intermediate with DNA, while GyrB binds cofactors and catalyzes ATP hydrolysis.

Its subcellular location is the cytoplasm. It catalyses the reaction ATP-dependent breakage, passage and rejoining of double-stranded DNA.. A type II topoisomerase that negatively supercoils closed circular double-stranded (ds) DNA in an ATP-dependent manner to modulate DNA topology and maintain chromosomes in an underwound state. Negative supercoiling favors strand separation, and DNA replication, transcription, recombination and repair, all of which involve strand separation. Also able to catalyze the interconversion of other topological isomers of dsDNA rings, including catenanes and knotted rings. Type II topoisomerases break and join 2 DNA strands simultaneously in an ATP-dependent manner. The chain is DNA gyrase subunit A from Nocardioides sp. (strain ATCC BAA-499 / JS614).